Consider the following 332-residue polypeptide: Glycerol-3-phosphate dehydrogenase [NAD(P)+] (332 aa).

Ser-11, Phe-12, Lys-32, and Lys-106 together coordinate NADPH. Residues Lys-106, Gly-137, and Ser-139 each contribute to the sn-glycerol 3-phosphate site. Ala-141 is an NADPH binding site. Sn-glycerol 3-phosphate contacts are provided by Lys-192, Asp-245, Ser-255, Arg-256, and Asn-257. Lys-192 serves as the catalytic Proton acceptor. Arg-256 lines the NADPH pocket. Val-280 and Glu-282 together coordinate NADPH.

The protein belongs to the NAD-dependent glycerol-3-phosphate dehydrogenase family.

The protein resides in the cytoplasm. The catalysed reaction is sn-glycerol 3-phosphate + NAD(+) = dihydroxyacetone phosphate + NADH + H(+). It carries out the reaction sn-glycerol 3-phosphate + NADP(+) = dihydroxyacetone phosphate + NADPH + H(+). The protein operates within membrane lipid metabolism; glycerophospholipid metabolism. Catalyzes the reduction of the glycolytic intermediate dihydroxyacetone phosphate (DHAP) to sn-glycerol 3-phosphate (G3P), the key precursor for phospholipid synthesis. The sequence is that of Glycerol-3-phosphate dehydrogenase [NAD(P)+] from Staphylococcus aureus (strain USA300).